Here is a 182-residue protein sequence, read N- to C-terminus: Large ribosomal subunit protein uL6 (182 aa).

It belongs to the universal ribosomal protein uL6 family. Part of the 50S ribosomal subunit.

Functionally, this protein binds to the 23S rRNA, and is important in its secondary structure. It is located near the subunit interface in the base of the L7/L12 stalk, and near the tRNA binding site of the peptidyltransferase center. The protein is Large ribosomal subunit protein uL6 of Karelsulcia muelleri (strain GWSS) (Sulcia muelleri).